We begin with the raw amino-acid sequence, 181 residues long: Shikimate kinase 2 (181 aa).

Residue 12–17 (GCGKTT) participates in ATP binding. Residues Thr-16 and Asp-32 each coordinate Mg(2+). Substrate-binding residues include Asp-34, Arg-58, and Gly-79. Residues 112 to 126 (EAEPEADLRPTLTGK) are LID domain. Arg-120 lines the ATP pocket. Residue Arg-139 participates in substrate binding.

The protein belongs to the shikimate kinase family. AroL subfamily. As to quaternary structure, monomer. Mg(2+) serves as cofactor.

The protein localises to the cytoplasm. It catalyses the reaction shikimate + ATP = 3-phosphoshikimate + ADP + H(+). It participates in metabolic intermediate biosynthesis; chorismate biosynthesis; chorismate from D-erythrose 4-phosphate and phosphoenolpyruvate: step 5/7. In terms of biological role, catalyzes the specific phosphorylation of the 3-hydroxyl group of shikimic acid using ATP as a cosubstrate. This chain is Shikimate kinase 2, found in Salmonella dublin (strain CT_02021853).